A 313-amino-acid chain; its full sequence is Ribosomal RNA small subunit methyltransferase H (313 aa).

Residues 35-37 (GGH), Asp-55, Phe-81, Asp-103, and Gln-110 contribute to the S-adenosyl-L-methionine site.

The protein belongs to the methyltransferase superfamily. RsmH family.

Its subcellular location is the cytoplasm. It catalyses the reaction cytidine(1402) in 16S rRNA + S-adenosyl-L-methionine = N(4)-methylcytidine(1402) in 16S rRNA + S-adenosyl-L-homocysteine + H(+). Specifically methylates the N4 position of cytidine in position 1402 (C1402) of 16S rRNA. The sequence is that of Ribosomal RNA small subunit methyltransferase H from Azotobacter vinelandii (strain DJ / ATCC BAA-1303).